The following is a 578-amino-acid chain: Arginine--tRNA ligase (578 aa).

The 'HIGH' region signature appears at 127 to 137 (PNLAKEMHVGH).

This sequence belongs to the class-I aminoacyl-tRNA synthetase family. In terms of assembly, monomer.

The protein localises to the cytoplasm. The catalysed reaction is tRNA(Arg) + L-arginine + ATP = L-arginyl-tRNA(Arg) + AMP + diphosphate. The sequence is that of Arginine--tRNA ligase from Pseudomonas putida (strain ATCC 47054 / DSM 6125 / CFBP 8728 / NCIMB 11950 / KT2440).